The primary structure comprises 152 residues: Protein SprT-like (152 aa).

Residues 7–148 (QRLVEEVSLQ…GKCKGKLILI (142 aa)) form the SprT-like domain. His-67 contacts Zn(2+). Glu-68 is an active-site residue. Position 71 (His-71) interacts with Zn(2+).

The protein belongs to the SprT family. It depends on Zn(2+) as a cofactor.

It localises to the cytoplasm. In Bacillus cereus (strain AH187), this protein is Protein SprT-like.